The sequence spans 492 residues: MVLVWLLLLLTLLAGARLLWGQWKLRNLHLPPLVPGFLHLLQPNLPIYLLGLTQRLGPIYRLRLGLQDVVVLNSKRTIEEALVRKWVDFAGRPQIPSYKLASQHCPDISLGDYSLFWKAHKKLTRSALLLGVRSSMEPRVEQLTQEFCERMRAQAGTPVTIQKEFSVLTCSIICCLTFGDKEDTLVHALHDCVQDLMKTWEHWSIQILDMVPFLRFFPSPGLRRLKQAIENRDHLVEKQLRRHKESMVAGQWRDMLDYMLQEAGRQRVEEGQGQLLEGHVHMSVVDLFIGGTETTANTLSWAVVYLLHHPEIQWRLQEELDRELGPGAAGSRVPYKDRARLPLLNATIAEVLRLRPVVPLALPHRATRPSSIFGYDIPEGTVVIPNLQGAHLDETVWEQPHEFRPDRFLAPGANPSALAFGCGARVCLGEPLARLELFVVLVQLLQAFTLLPPEGALPSLQPHPHSGINLKVQPFQVRLQPRGGRGEGPGPR.

Arginine 92 and lysine 121 together coordinate heme b. Arginine 232 lines the 17alpha-hydroxyprogesterone pocket. Arginine 232 provides a ligand contact to progesterone. Heme b is bound by residues histidine 364, arginine 425, and cysteine 427.

This sequence belongs to the cytochrome P450 family. It depends on heme b as a cofactor.

It localises to the endoplasmic reticulum membrane. The protein resides in the microsome membrane. It carries out the reaction progesterone + reduced [NADPH--hemoprotein reductase] + O2 = 21-hydroxyprogesterone + oxidized [NADPH--hemoprotein reductase] + H2O + H(+). The catalysed reaction is 17alpha-hydroxyprogesterone + reduced [NADPH--hemoprotein reductase] + O2 = 11-deoxycortisol + oxidized [NADPH--hemoprotein reductase] + H2O + H(+). A cytochrome P450 monooxygenase that plays a major role in adrenal steroidogenesis. Catalyzes the hydroxylation at C-21 of progesterone and 17alpha-hydroxyprogesterone to respectively form 11-deoxycorticosterone and 11-deoxycortisol, intermediate metabolites in the biosynthetic pathway of mineralocorticoids and glucocorticoids. Mechanistically, uses molecular oxygen inserting one oxygen atom into a substrate, and reducing the second into a water molecule, with two electrons provided by NADPH via cytochrome P450 reductase (CPR; NADPH-ferrihemoprotein reductase). This chain is Steroid 21-hydroxylase (CYP21), found in Sus scrofa (Pig).